A 272-amino-acid chain; its full sequence is Auxin-responsive protein IAA5 (272 aa).

The interval 1–92 (MSPPLEPHDY…DSSPRHGASS (92 aa)) is disordered. 2 stretches are compositionally biased toward low complexity: residues 14 to 33 (SAAAASPTPSSSSCSSSPNP) and 40 to 50 (PRLTLRLGLPG). An EAR-like (transcriptional repression) motif is present at residues 44 to 48 (LRLGL). A PB1 domain is found at 152 to 256 (PLYVKVSMDG…RKLKIMRGSD (105 aa)).

It belongs to the Aux/IAA family. In terms of assembly, homodimers and heterodimers. In terms of tissue distribution, highly expressed in roots and flowers. Expressed in shoots.

The protein localises to the nucleus. In terms of biological role, aux/IAA proteins are short-lived transcriptional factors that function as repressors of early auxin response genes at low auxin concentrations. This chain is Auxin-responsive protein IAA5 (IAA5), found in Oryza sativa subsp. indica (Rice).